The primary structure comprises 544 residues: Chaperonin GroEL (544 aa).

Residues 29–32 (TLGP), 86–90 (DGTTT), glycine 413, 476–478 (NAA), and aspartate 492 contribute to the ATP site.

The protein belongs to the chaperonin (HSP60) family. As to quaternary structure, forms a cylinder of 14 subunits composed of two heptameric rings stacked back-to-back. Interacts with the co-chaperonin GroES.

Its subcellular location is the cytoplasm. It carries out the reaction ATP + H2O + a folded polypeptide = ADP + phosphate + an unfolded polypeptide.. In terms of biological role, together with its co-chaperonin GroES, plays an essential role in assisting protein folding. The GroEL-GroES system forms a nano-cage that allows encapsulation of the non-native substrate proteins and provides a physical environment optimized to promote and accelerate protein folding. In Bacillus cereus (strain B4264), this protein is Chaperonin GroEL.